The sequence spans 328 residues: DNA-directed RNA polymerase subunit alpha (328 aa).

Residues 1–231 form an alpha N-terminal domain (alpha-NTD) region; that stretch reads MIQQMQMPEK…DHVRLFSLFS (231 aa). An alpha C-terminal domain (alpha-CTD) region spans residues 252-328; it reads MRKLLMTRIE…MEVTKYRLNQ (77 aa).

It belongs to the RNA polymerase alpha chain family. In terms of assembly, homodimer. The RNAP catalytic core consists of 2 alpha, 1 beta, 1 beta' and 1 omega subunit. When a sigma factor is associated with the core the holoenzyme is formed, which can initiate transcription.

It carries out the reaction RNA(n) + a ribonucleoside 5'-triphosphate = RNA(n+1) + diphosphate. In terms of biological role, DNA-dependent RNA polymerase catalyzes the transcription of DNA into RNA using the four ribonucleoside triphosphates as substrates. The protein is DNA-directed RNA polymerase subunit alpha of Chloroherpeton thalassium (strain ATCC 35110 / GB-78).